We begin with the raw amino-acid sequence, 343 residues long: Phosphoribosylformylglycinamidine cyclo-ligase (343 aa).

This sequence belongs to the AIR synthase family.

It localises to the cytoplasm. It catalyses the reaction 2-formamido-N(1)-(5-O-phospho-beta-D-ribosyl)acetamidine + ATP = 5-amino-1-(5-phospho-beta-D-ribosyl)imidazole + ADP + phosphate + H(+). It functions in the pathway purine metabolism; IMP biosynthesis via de novo pathway; 5-amino-1-(5-phospho-D-ribosyl)imidazole from N(2)-formyl-N(1)-(5-phospho-D-ribosyl)glycinamide: step 2/2. The sequence is that of Phosphoribosylformylglycinamidine cyclo-ligase from Thermodesulfovibrio yellowstonii (strain ATCC 51303 / DSM 11347 / YP87).